The following is a 128-amino-acid chain: Large ribosomal subunit protein bL20 (128 aa).

It belongs to the bacterial ribosomal protein bL20 family.

Its function is as follows. Binds directly to 23S ribosomal RNA and is necessary for the in vitro assembly process of the 50S ribosomal subunit. It is not involved in the protein synthesizing functions of that subunit. The sequence is that of Large ribosomal subunit protein bL20 from Anaplasma marginale (strain Florida).